We begin with the raw amino-acid sequence, 447 residues long: Tubulin beta-5 chain (447 aa).

GTP contacts are provided by Gln11, Glu69, Ser138, Gly142, Thr143, Gly144, Asn204, and Asn226. Glu69 is a binding site for Mg(2+). Positions 424–447 (QYQDATAEEEGEFDEDEELDDAMG) are disordered. Over residues 429 to 447 (TAEEEGEFDEDEELDDAMG) the composition is skewed to acidic residues.

The protein belongs to the tubulin family. In terms of assembly, dimer of alpha and beta chains. A typical microtubule is a hollow water-filled tube with an outer diameter of 25 nm and an inner diameter of 15 nM. Alpha-beta heterodimers associate head-to-tail to form protofilaments running lengthwise along the microtubule wall with the beta-tubulin subunit facing the microtubule plus end conferring a structural polarity. Microtubules usually have 13 protofilaments but different protofilament numbers can be found in some organisms and specialized cells. Requires Mg(2+) as cofactor.

Its subcellular location is the cytoplasm. The protein localises to the cytoskeleton. Its function is as follows. Tubulin is the major constituent of microtubules, a cylinder consisting of laterally associated linear protofilaments composed of alpha- and beta-tubulin heterodimers. Microtubules grow by the addition of GTP-tubulin dimers to the microtubule end, where a stabilizing cap forms. Below the cap, tubulin dimers are in GDP-bound state, owing to GTPase activity of alpha-tubulin. The chain is Tubulin beta-5 chain (TUBB5) from Ectocarpus variabilis (Brown alga).